The sequence spans 315 residues: Eukaryotic translation initiation factor 2 subunit 1 (315 aa).

The S1 motif domain occupies 17–88 (EDVVMVNVRS…EKGYIDLSKR (72 aa)). The residue at position 49 (Ser-49) is a Phosphoserine; by HRI. A Phosphoserine modification is found at Ser-52. The residue at position 141 (Lys-141) is an N6-acetyllysine. At Ser-158 the chain carries Phosphoserine. Phosphothreonine is present on residues Thr-279 and Thr-281. The interval 293 to 315 (LERENAEVDGDDDAEEMEAKAED) is disordered. A compositionally biased stretch (acidic residues) spans 299-308 (EVDGDDDAEE).

It belongs to the eIF-2-alpha family. In terms of assembly, eukaryotic translation initiation factor 2 eIF2 is a heterotrimeric complex composed of an alpha (EIF2S1), a beta (EIF2S2) and a gamma (EIF2S3) chain. eIF2 is member of the 43S pre-initiation complex (43S PIC). eIF2 forms a complex with at least CELF1/CUGBP1, CALR, CALR3, EIF2S1, EIF2S2, HSP90B1 and HSPA5. Interaction with METAP2 protects EIF2S1 from inhibitory phosphorylation. Interacts with ABCF1 isoform 2. Associates with ribosomes. Interacts with DDX3X in an RNA-independent manner. Interacts with CDC123. As to quaternary structure, (Microbial infection) Interacts with rotavirus A non-structural protein 2; this interaction probably plays a role in the sequestration of IF2A in viral factories. Interacts with rotavirus A non-structural protein 5; this interaction probably plays a role in its sequestration in viral factories. In terms of processing, phosphorylation at Ser-49 and Ser-52 stabilizes the eIF-2/GDP/eIF2B complex and prevents GDP/GTP exchange reaction, thus impairing the recycling of eIF-2 between successive rounds of initiation and leading to global inhibition of translation, while concomitantly initiating the preferential translation of integrated stress response (ISR)-specific mRNAs. Substrate for at least 4 kinases: EIF2AK1/HRI, EIF2AK2/PKR, EIF2AK3/PERK and EIF2AK4/GCN2. Phosphorylation on Ser-52 by the EIF2AK4/GCN2 protein kinase occurs in response to amino acid starvation and UV irradiation. Phosphorylation at Ser-52 by the EIF2AK3/PERK protein kinase occurs in response to the unfolded protein response. Phosphorylation at Ser-52 by EIF2AK1/HRI in response to mitochondrial damage promotes relocalization to the mitochondrial surface. Post-translationally, (Microbial infection) Phosphorylation by vaccinia virus protein E3 and rotavirus A stabilizes the eIF-2/GDP/eIF2B complex and prevents GDP/GTP exchange reaction, thus impairing the recycling of eIF-2 between successive rounds of initiation and leading to global inhibition of translation.

It is found in the cytoplasm. The protein resides in the stress granule. Its subcellular location is the cytosol. The protein localises to the mitochondrion. Activity is regulated by phosphorylation at Ser-49 and Ser-52, which stabilizes the eIF2/GDP/eIF2B complex and prevents the eIF2B-mediated exchange of GDP for GTP, thereby preventing the formation of the 43S pre-initiation complex (43S PIC). This results in the global attenuation of 5' cap-dependent protein synthesis and concomitant translation of ISR-specific mRNAs that contain a short upstream open reading frame (uORF) in their 5' UTR, such as ATF4, ATF5, DDIT3/CHOP and PPP1R15A/GADD34. In terms of biological role, member of the eIF2 complex that functions in the early steps of protein synthesis by forming a ternary complex with GTP and initiator tRNA. This complex binds to a 40S ribosomal subunit, followed by mRNA binding to form a 43S pre-initiation complex (43S PIC). Junction of the 60S ribosomal subunit to form the 80S initiation complex is preceded by hydrolysis of the GTP bound to eIF2 and release of an eIF2-GDP binary complex. In order for eIF2 to recycle and catalyze another round of initiation, the GDP bound to eIF2 must exchange with GTP by way of a reaction catalyzed by eIF2B. EIF2S1/eIF2-alpha is a key component of the integrated stress response (ISR), required for adaptation to various stress: phosphorylation by metabolic-stress sensing protein kinases (EIF2AK1/HRI, EIF2AK2/PKR, EIF2AK3/PERK and EIF2AK4/GCN2) in response to stress converts EIF2S1/eIF2-alpha in a global protein synthesis inhibitor, leading to an attenuation of cap-dependent translation, while concomitantly initiating the preferential translation of ISR-specific mRNAs, such as the transcriptional activators ATF4 and QRICH1, and hence allowing ATF4- and QRICH1-mediated reprogramming. EIF2S1/eIF2-alpha also acts as an activator of mitophagy in response to mitochondrial damage: phosphorylation by EIF2AK1/HRI promotes relocalization to the mitochondrial surface, thereby triggering PRKN-independent mitophagy. The protein is Eukaryotic translation initiation factor 2 subunit 1 of Homo sapiens (Human).